Reading from the N-terminus, the 1182-residue chain is Protein patched homolog 2 (1182 aa).

Topologically, residues 1-57 are cytoplasmic; sequence MVRPLSLGELPPSYTPPARSSAPHILAGSLQAPLWLRAYFQGLLFSLGCRIQKHCGK. A helical transmembrane segment spans residues 58–78; the sequence is VLFLGLVAFGALALGLRVAVI. The Extracellular portion of the chain corresponds to 79–394; the sequence is ETDLEQLWVE…DILRAFSEVS (316 aa). Asn370 carries N-linked (GlcNAc...) asparagine glycosylation. In terms of domain architecture, SSD spans 394–552; the sequence is STTRVVGGYL…MLVFPAILSL (159 aa). Residues 395 to 414 traverse the membrane as a helical segment; that stretch reads TTRVVGGYLLMLAYACVTML. At 415–428 the chain is on the cytoplasmic side; the sequence is RWDCAQSQGAVGLA. Residues 429-449 form a helical membrane-spanning segment; it reads GVLLVALAVASGLGLCALLGI. Topologically, residues 450–457 are extracellular; sequence TFNAATTQ. Residues 458-478 form a helical membrane-spanning segment; sequence VLPFLALGIGVDDIFLLAHAF. Residues 479–501 are Cytoplasmic-facing; that stretch reads TKAPPDTPLPERMGECLRSTGTS. A helical transmembrane segment spans residues 502 to 522; it reads VALTSVNNMVAFFMAALVPIP. Topologically, residues 523–531 are extracellular; that stretch reads ALRAFSLQA. The chain crosses the membrane as a helical span at residues 532–552; the sequence is AIVVGCNFAAVMLVFPAILSL. At 553–686 the chain is on the cytoplasmic side; it reads DLRRRHRQRL…APLLLQTRAK (134 aa). Residues 687–707 traverse the membrane as a helical segment; it reads ALVLLFFGALLGLSLYGATLV. Over 708 to 963 the chain is Extracellular; it reads QDGLALTDVV…WEQYLGLRRC (256 aa). Residue Asn812 is glycosylated (N-linked (GlcNAc...) asparagine). A helical transmembrane segment spans residues 964-984; sequence FLLAVCILLVCTFLVCALLLL. Residues 985-991 lie on the Cytoplasmic side of the membrane; that stretch reads SPWTAGL. The helical transmembrane segment at 992–1012 threads the bilayer; that stretch reads IVLVLAMMTVELFGIMGFLGI. Lys1013 is a topological domain (extracellular). Residues 1014 to 1034 form a helical membrane-spanning segment; the sequence is LSAIPVVILVASIGIGVEFTV. Topologically, residues 1035-1064 are cytoplasmic; sequence HVALGFLTSHGSRNLRAASALEQTFAPVTD. Residues 1065–1085 form a helical membrane-spanning segment; sequence GAVSTLLGLLMLAGSNFDFII. A topological domain (extracellular) is located at residue Arg1086. Residues 1087 to 1107 traverse the membrane as a helical segment; sequence YFFVVLTVLTLLGLLHGLLLL. The Cytoplasmic portion of the chain corresponds to 1108–1182; it reads PVLLSILGPP…YVHPASEEPT (75 aa).

The protein belongs to the patched family. In terms of tissue distribution, expressed in epithelial cells of the developing hair, tooth and whisker.

The protein resides in the membrane. Functionally, plays a role in the control of cellular growth. May have a role in epidermal development. May act as a receptor for Sonic hedgehog (SHH). The chain is Protein patched homolog 2 (Ptch2) from Mus musculus (Mouse).